Consider the following 292-residue polypeptide: Chronophin (292 aa).

The active-site Nucleophile is Asp25. 2 residues coordinate Mg(2+): Asp25 and Asp27. Catalysis depends on Asp27, which acts as the Proton donor. Residues 58–60 (SNN), His178, and Lys209 each bind substrate. Residue Asp234 participates in Mg(2+) binding.

The protein belongs to the HAD-like hydrolase superfamily. In terms of assembly, homodimer. Mg(2+) serves as cofactor. Ubiquitous. highly expressed in brain (at protein level).

It localises to the cytoplasm. The protein localises to the cytosol. It is found in the cytoskeleton. Its subcellular location is the cell projection. The protein resides in the ruffle membrane. It localises to the lamellipodium membrane. The protein localises to the cell membrane. The catalysed reaction is pyridoxal 5'-phosphate + H2O = pyridoxal + phosphate. The enzyme catalyses pyridoxine 5'-phosphate + H2O = pyridoxine + phosphate. It catalyses the reaction pyridoxamine + phosphate = pyridoxamine 5'-phosphate + H2O. It carries out the reaction O-phospho-L-seryl-[protein] + H2O = L-seryl-[protein] + phosphate. With respect to regulation, inhibited by beryllium trifluoride. In terms of biological role, functions as a pyridoxal phosphate (PLP) phosphatase, which also catalyzes the dephosphorylation of pyridoxine 5'-phosphate (PNP) and pyridoxamine 5'-phosphate (PMP), with order of substrate preference PLP &gt; PNP &gt; PMP and therefore plays a role in vitamin B6 metabolism. Also functions as a protein serine phosphatase that specifically dephosphorylates 'Ser-3' in proteins of the actin-depolymerizing factor (ADF)/cofilin family like CFL1 and DSTN. Thereby, regulates cofilin-dependent actin cytoskeleton reorganization, being required for normal progress through mitosis and normal cytokinesis. Does not dephosphorylate phosphothreonines in LIMK1. Does not dephosphorylate peptides containing phosphotyrosine. This is Chronophin from Mus musculus (Mouse).